Consider the following 203-residue polypeptide: CASP-like protein 1B1 (203 aa).

The Cytoplasmic portion of the chain corresponds to 1–24; it reads MALVNAEKPEVGSSPSSLGPRNKS. Residues 25–45 form a helical membrane-spanning segment; the sequence is WVLLMLRFVAFLATAAATIVM. The Extracellular portion of the chain corresponds to 46–76; the sequence is AANRETKTFVVATIGSTPIKATVTAKFQHTP. A helical transmembrane segment spans residues 77 to 97; that stretch reads AFVFFVIANGMGSIHNLVMIA. Over 98–114 the chain is Cytoplasmic; the sequence is GDTFVRKFDYKGLRWVT. The helical transmembrane segment at 115–135 threads the bilayer; sequence VAILDMLTAALISGGVNAAVF. Over 136 to 165 the chain is Extracellular; that stretch reads MAELGKNGNSHAKWNKICDRFGSFCDHGGA. The helical transmembrane segment at 166 to 186 threads the bilayer; sequence AIIASFIGLLLMLVISIISII. Over 187–203 the chain is Cytoplasmic; it reads KLLKPKSPLVDSHVLAP.

This sequence belongs to the Casparian strip membrane proteins (CASP) family. As to quaternary structure, homodimer and heterodimers.

It is found in the cell membrane. The protein is CASP-like protein 1B1 of Ricinus communis (Castor bean).